Reading from the N-terminus, the 490-residue chain is tRNA-2-methylthio-N(6)-dimethylallyladenosine synthase (490 aa).

Positions 37–154 (KKVYIATQGC…LPELYDKSTT (118 aa)) constitute an MTTase N-terminal domain. Positions 46, 83, 117, 198, 202, and 205 each coordinate [4Fe-4S] cluster. One can recognise a Radical SAM core domain in the interval 184-416 (KVEGYRAFVS…QKVIRDSTLK (233 aa)). Residues 419 to 487 (EEMVGKTLRV…PHMVRGELVD (69 aa)) enclose the TRAM domain.

This sequence belongs to the methylthiotransferase family. MiaB subfamily. Monomer. [4Fe-4S] cluster serves as cofactor.

The protein localises to the cytoplasm. The catalysed reaction is N(6)-dimethylallyladenosine(37) in tRNA + (sulfur carrier)-SH + AH2 + 2 S-adenosyl-L-methionine = 2-methylsulfanyl-N(6)-dimethylallyladenosine(37) in tRNA + (sulfur carrier)-H + 5'-deoxyadenosine + L-methionine + A + S-adenosyl-L-homocysteine + 2 H(+). Catalyzes the methylthiolation of N6-(dimethylallyl)adenosine (i(6)A), leading to the formation of 2-methylthio-N6-(dimethylallyl)adenosine (ms(2)i(6)A) at position 37 in tRNAs that read codons beginning with uridine. This Psychrobacter sp. (strain PRwf-1) protein is tRNA-2-methylthio-N(6)-dimethylallyladenosine synthase.